The following is a 495-amino-acid chain: MQGTKIRLLAGSLLMLASAGYVQADALQPDPAWQQGTLANGLQWQVLATPQRPSDRIEVRLQVNTGSLTESTQQSGFSHAIPRIALTQSGGLDAAQARSLWQQGFDPKRPMPPVIVSYDSTLYNLSLPNNRNDLLKEALTYLANVSGKLTITPETVNHALSSEDMVATWPADTKEGWWRYRLKGSALLGHDPAEPLKQPVDAAKIQAFYEKWYTPDAMTLIVVGNIDARSVAEQINKTFGTLKGKRETPAPVPTLSPLRAESVSIMTDAVRQDRLSIMWDTPWQPIRESAALLRYWQADLAREALFWHIQQELTKNNAKDIGLGFDCRVLFLRAQCAINIESPNDKLNTNLSLVANELAKVRDKGLSEEEFTALVAQKNLELQKLFATYARTDTDILTGQRMRSLQNQVVDIAPEQYQKLRQNFLNSLTVDMLNQNLRQQLSQEMALILLQPQGEPEFNMKALKATWDEIMVPTTAAAVEADEAHPEVTETPAAQ.

Residues 1 to 24 (MQGTKIRLLAGSLLMLASAGYVQA) form the signal peptide.

This sequence belongs to the peptidase M16 family.

The protein resides in the periplasm. The protein is Protein YhjJ (yhjJ) of Salmonella typhimurium (strain LT2 / SGSC1412 / ATCC 700720).